A 129-amino-acid polypeptide reads, in one-letter code: Small ribosomal subunit protein uS9 (129 aa).

This sequence belongs to the universal ribosomal protein uS9 family.

This chain is Small ribosomal subunit protein uS9, found in Helicobacter pylori (strain Shi470).